Reading from the N-terminus, the 299-residue chain is tRNA dimethylallyltransferase (299 aa).

13–20 (GPTASGKT) contacts ATP. 15 to 20 (TASGKT) is a binding site for substrate. Residues 38 to 41 (DSRQ) form an interaction with substrate tRNA region.

Belongs to the IPP transferase family. As to quaternary structure, monomer. The cofactor is Mg(2+).

It catalyses the reaction adenosine(37) in tRNA + dimethylallyl diphosphate = N(6)-dimethylallyladenosine(37) in tRNA + diphosphate. In terms of biological role, catalyzes the transfer of a dimethylallyl group onto the adenine at position 37 in tRNAs that read codons beginning with uridine, leading to the formation of N6-(dimethylallyl)adenosine (i(6)A). In Prochlorococcus marinus (strain MIT 9313), this protein is tRNA dimethylallyltransferase.